The chain runs to 111 residues: C-type lectin lectoxin-Enh1 (111 aa).

Positions 1 to 23 are cleaved as a signal peptide; that stretch reads MGQFTVVSLGLLAMFLSLSGAKG. An intrachain disulfide couples cysteine 26 to cysteine 37. In terms of domain architecture, C-type lectin spans 33–108; sequence RNGVCNKLFP…CASLHPFICQ (76 aa). A Mannose-binding motif is present at residues 72–74; it reads EPN. Residues glutamate 80, asparagine 95, and aspartate 96 each coordinate Ca(2+). Cysteine 82 and cysteine 99 are oxidised to a cystine.

The protein belongs to the true venom lectin family. In terms of tissue distribution, expressed by the venom gland.

Its subcellular location is the secreted. Its function is as follows. Mannose-binding lectin which recognizes specific carbohydrate structures and agglutinates a variety of animal cells by binding to cell-surface glycoproteins and glycolipids. May be a calcium-dependent lectin. This chain is C-type lectin lectoxin-Enh1, found in Pseudoferania polylepis (Macleay's water snake).